Consider the following 445-residue polypeptide: Phosphoglucosamine mutase (445 aa).

S102 serves as the catalytic Phosphoserine intermediate. The Mg(2+) site is built by S102, D241, D243, and D245. S102 carries the phosphoserine modification.

The protein belongs to the phosphohexose mutase family. The cofactor is Mg(2+). Activated by phosphorylation.

The enzyme catalyses alpha-D-glucosamine 1-phosphate = D-glucosamine 6-phosphate. Functionally, catalyzes the conversion of glucosamine-6-phosphate to glucosamine-1-phosphate. In Shewanella piezotolerans (strain WP3 / JCM 13877), this protein is Phosphoglucosamine mutase.